The following is an 84-amino-acid chain: Dolichol phosphate-mannose biosynthesis regulatory protein (84 aa).

2 consecutive transmembrane segments (helical) span residues 11 to 31 (FGLV…VILL) and 49 to 69 (YAVL…GLFI).

Belongs to the DPM2 family. Component of the dolichol-phosphate mannose (DPM) synthase complex composed of DPM1, DPM2 and DPM3; in the complex interacts directly with DPM3. Component of the glycosylphosphatidylinositol-N-acetylglucosaminyltransferase (GPI-GnT) complex composed at least by PIGA, PIGC, PIGH, PIGP, PIGQ, PIGY and DPM2. Interacts with PIGA, PIGC and PIGQ.

The protein localises to the endoplasmic reticulum membrane. It participates in protein modification; protein glycosylation. Its function is as follows. Regulates the biosynthesis of dolichol phosphate-mannose. Regulatory subunit of the dolichol-phosphate mannose (DPM) synthase complex; essential for the ER localization and stable expression of DPM1. Part of the glycosylphosphatidylinositol-N-acetylglucosaminyltransferase (GPI-GnT) complex that catalyzes the transfer of N-acetylglucosamine from UDP-N-acetylglucosamine to phosphatidylinositol and participates in the first step of GPI biosynthesis. May act by regulating the GPI-GNT complex. In Rattus norvegicus (Rat), this protein is Dolichol phosphate-mannose biosynthesis regulatory protein.